A 360-amino-acid polypeptide reads, in one-letter code: Aminomethyltransferase (360 aa).

This sequence belongs to the GcvT family. As to quaternary structure, the glycine cleavage system is composed of four proteins: P, T, L and H.

The catalysed reaction is N(6)-[(R)-S(8)-aminomethyldihydrolipoyl]-L-lysyl-[protein] + (6S)-5,6,7,8-tetrahydrofolate = N(6)-[(R)-dihydrolipoyl]-L-lysyl-[protein] + (6R)-5,10-methylene-5,6,7,8-tetrahydrofolate + NH4(+). In terms of biological role, the glycine cleavage system catalyzes the degradation of glycine. The chain is Aminomethyltransferase from Legionella pneumophila subsp. pneumophila (strain Philadelphia 1 / ATCC 33152 / DSM 7513).